A 418-amino-acid chain; its full sequence is Lactate dehydrogenase (NAD(+),ferredoxin) subunit LctC (418 aa).

FAD-binding positions include arginine 285, 325–328 (IGLS), 343–348 (SGAVQF), asparagine 362, and 380–381 (DL).

The protein belongs to the ETF alpha-subunit/FixB family. As to quaternary structure, part of the stable heterotrimeric lactate dehydrogenase-Etf complex, which is formed by the lactate dehydrogenase LctD and the electron-transferring flavoprotein (Etf) alpha (LctC) and beta (LctB) subunits. It depends on FAD as a cofactor. [4Fe-4S] cluster is required as a cofactor.

The protein localises to the cytoplasm. It catalyses the reaction lactate + 2 reduced [2Fe-2S]-[ferredoxin] + 2 NAD(+) = 2 oxidized [2Fe-2S]-[ferredoxin] + pyruvate + 2 NADH. With respect to regulation, activity is stimulated by divalent cations. Highest stimulation is observed with Ca(2+). Its function is as follows. The lactate dehydrogenase-Etf complex catalyzes the oxidation of lactate to pyruvate. It uses flavin-based electron confurcation to drive endergonic lactate oxidation with NAD(+) as oxidant at the expense of simultaneous exergonic electron flow from reduced ferredoxin to NAD(+). The electron transfer flavoprotein (Etf) mediates the electron transfer between the different donors and acceptors. The protein is Lactate dehydrogenase (NAD(+),ferredoxin) subunit LctC of Acetobacterium woodii (strain ATCC 29683 / DSM 1030 / JCM 2381 / KCTC 1655 / WB1).